A 332-amino-acid chain; its full sequence is MAFVPAPGYQPTYNPTLPYHNPIPGGLRVGMSVYIQGVASEHMKRFFVNFEVGQGQGADVAFHFNPRFDGWDKVVLNSKQNGSWGQEERKMSMPFRKGAAFELVFMVMTEHFKVVVNGTPFHEFKHRIPLQMVTHLHVDGDLMLQSINFIGGQPPSNQMPMPAQAYPMPMSAQAYPSPGQYYQQQSRLPTMEGPPAFNPPVPFNGRLQGGLIVRRTIIIKGYIPPTAKSFVINFKVGSSGDVALHINPRMTEGAVVRNSFLNGSWGSEERKVSYNPFGPGQFFDLSVRCGADRFKVYANGKHLFDFSHRLSAFQRVDLVEIHGDVTLSYVQI.

Galectin domains lie at 19 to 150 and 203 to 332; these read YHNP…INFI and FNGR…YVQI. Residue 265 to 271 participates in a beta-D-galactoside binding; the sequence is WGSEERK. Phosphoserine is present on Ser-267.

Monomer.

Galectin that binds lactose and a related range of sugars. May be involved in the assembly of adherens junctions. In Bos taurus (Bovine), this protein is Galectin-4 (LGALS4).